The following is a 317-amino-acid chain: Succinate receptor 1 (317 aa).

The Extracellular portion of the chain corresponds to 1–23 (MAQNLSCENWLATEAILNKYYLS). N-linked (GlcNAc...) asparagine glycosylation is present at Asn4. Residues 24–47 (AFYAIEFIFGLLGNVTVVFGYLFC) traverse the membrane as a helical segment. Topologically, residues 48 to 55 (MKNWNSSN) are cytoplasmic. Residues 56 to 76 (VYLFNLSISDFAFLCTLPILI) traverse the membrane as a helical segment. The Extracellular segment spans residues 77–101 (KSYANDKGTYGDVLCISNRYVLHTN). Cys91 and Cys168 are disulfide-bonded. Residues 102–119 (LYTSILFLTFISMDRYLL) traverse the membrane as a helical segment. The Cytoplasmic portion of the chain corresponds to 120 to 133 (MKYPFREHFLQKKE). The chain crosses the membrane as a helical span at residues 134 to 157 (FAILISLAVWALVTLEVLPMLTFI). Residues 158–180 (NSVPKEEGSNCIDYASSGNPEHN) are Extracellular-facing. Residues 181–204 (LIYSLCLTLLGFLIPLSVMCFFYY) form a helical membrane-spanning segment. The Cytoplasmic segment spans residues 205–228 (KMVVFLKRRSQQQATALPLDKPQR). A helical transmembrane segment spans residues 229–246 (LVVLAVVIFSILFTPYHI). At 247–277 (MRNLRIASRLDSWPQGCTQKAIKSIYTLTRP) the chain is on the extracellular side. The chain crosses the membrane as a helical span at residues 278–294 (LAFLNSAINPIFYFLMG). Residues 295–317 (DHYREMLISKFRQYFKSLTSFRT) lie on the Cytoplasmic side of the membrane.

This sequence belongs to the G-protein coupled receptor 1 family. As to expression, predominantly expressed in the kidney (proximal and distal tubules and the juxtaglomerular apparatus). Weakly expressed in liver, spleen and small intestine. Highly expressed in immature dendritic cells, expression rapidly downregulates after maturation. Also expressed in macrophages. Specifically expressed in intestinal tuft cells. Expression in whole muscle is attributable to major non-myofibrillar resident cell types, including stromal, endothelial and satellite cell populations.

It localises to the cell membrane. In terms of biological role, g protein-coupled receptor for succinate able to mediate signaling through Gq/GNAQ or Gi/GNAI second messengers depending on the cell type and the processes regulated. Succinate-SUCNR1 signaling serves as a link between metabolic stress, inflammation and energy homeostasis. In macrophages, plays a range of immune-regulatory roles. During inflammation, succinate-SUCNR1 signaling may act as an anti-inflammatory mediator or boost inflammation depending on the inflammatory status of cells. Hyperpolarizes M2 macrophages versus M1 phenotype through Gq signaling by regulating the transcription of genes involved in immune function. In activated M1 macrophages, plays a pro-inflammatory role in response to LPS. Expressed in dendritic cells, where it is involved in the sensing of immunological danger and enhances immunity. Mediates succinate triggered intracelleular calcium mobilization, induces migratory responses and acts in synergy with Toll-like receptor ligands for the production of proinflammatory cytokines as well as an enhancement of antigen-specific activation of helper T cells. In the small intestine, mediates the activation of tuft cells by dietary succinate and triggers type 2 immunity. In adipocytes, plays an important role in the control of energy metabolism. In response to succinate, controls leptin expression in an AMPK-JNK-CEBPA-dependent as well as circadian clock-regulated manner. In muscle tissue, is expressed in non-muscle cells and coordinates muscle remodeling in response to the succinate produced during exercise training in a paracrine manner. In retina, acts as a mediator of vessel growth during retinal development. In response to succinate, regulates the production of angiogenic factors, including VEGF, by retinal ganglion neurons. This chain is Succinate receptor 1 (Sucnr1), found in Mus musculus (Mouse).